We begin with the raw amino-acid sequence, 363 residues long: Protein RecA (363 aa).

78–85 (GPESGGKT) is an ATP binding site.

It belongs to the RecA family.

The protein localises to the cytoplasm. Can catalyze the hydrolysis of ATP in the presence of single-stranded DNA, the ATP-dependent uptake of single-stranded DNA by duplex DNA, and the ATP-dependent hybridization of homologous single-stranded DNAs. It interacts with LexA causing its activation and leading to its autocatalytic cleavage. Probably involved in base excision repair. Functionally, following severe irradiation (7 kGy of gamma irradiation) genomic DNA is fragmented. DNA is progressively degraded for the first 1.5 hours after IR, in a step promoted by RecA and counterbalanced by DNA Pol I and Pol III, followed by massive DNA synthesis and genome reassembly in the next hour. Optimal priming of DNA synthesis requires both RecA and RadA, Pol III initiates DNA synthesis while both Pol I and Pol III are required for its continuation. In the absence of RecA the majority of the chromosome is still reconstituted, via either single-strand annealing or non-homologous end joining. This is Protein RecA from Deinococcus radiodurans (strain ATCC 13939 / DSM 20539 / JCM 16871 / CCUG 27074 / LMG 4051 / NBRC 15346 / NCIMB 9279 / VKM B-1422 / R1).